The chain runs to 271 residues: Regulatory protein RecX (271 aa).

This sequence belongs to the RecX family.

The protein localises to the cytoplasm. Its function is as follows. Modulates RecA activity. The protein is Regulatory protein RecX of Lactobacillus delbrueckii subsp. bulgaricus (strain ATCC 11842 / DSM 20081 / BCRC 10696 / JCM 1002 / NBRC 13953 / NCIMB 11778 / NCTC 12712 / WDCM 00102 / Lb 14).